Here is a 227-residue protein sequence, read N- to C-terminus: NAD(P)H-quinone oxidoreductase subunit K, chloroplastic (227 aa).

Residues Cys43, Cys44, Cys108, and Cys139 each contribute to the [4Fe-4S] cluster site.

This sequence belongs to the complex I 20 kDa subunit family. As to quaternary structure, NDH is composed of at least 16 different subunits, 5 of which are encoded in the nucleus. The cofactor is [4Fe-4S] cluster.

Its subcellular location is the plastid. The protein resides in the chloroplast thylakoid membrane. It carries out the reaction a plastoquinone + NADH + (n+1) H(+)(in) = a plastoquinol + NAD(+) + n H(+)(out). It catalyses the reaction a plastoquinone + NADPH + (n+1) H(+)(in) = a plastoquinol + NADP(+) + n H(+)(out). Functionally, NDH shuttles electrons from NAD(P)H:plastoquinone, via FMN and iron-sulfur (Fe-S) centers, to quinones in the photosynthetic chain and possibly in a chloroplast respiratory chain. The immediate electron acceptor for the enzyme in this species is believed to be plastoquinone. Couples the redox reaction to proton translocation, and thus conserves the redox energy in a proton gradient. The sequence is that of NAD(P)H-quinone oxidoreductase subunit K, chloroplastic from Citrus sinensis (Sweet orange).